The following is a 127-amino-acid chain: UPF0102 protein Gura_3756 (127 aa).

It belongs to the UPF0102 family.

The polypeptide is UPF0102 protein Gura_3756 (Geotalea uraniireducens (strain Rf4) (Geobacter uraniireducens)).